Reading from the N-terminus, the 1023-residue chain is Sodium/potassium-transporting ATPase subunit alpha-1 (1023 aa).

The propeptide occupies 1–5 (MGLGK). A compositionally biased stretch (basic and acidic residues) spans 1–11 (MGLGKGKDEYK). A disordered region spans residues 1-33 (MGLGKGKDEYKLAATSEDGGKKDKKAKAKKDMD). Residues 6-87 (GKDEYKLAAT…NALTPPPTTP (82 aa)) lie on the Cytoplasmic side of the membrane. Position 16 is a phosphoserine; by PKC (Ser-16). The interval 82-84 (PPP) is interaction with phosphoinositide-3 kinase. The chain crosses the membrane as a helical span at residues 88–108 (EWVKFCKQLFGGFSMLLWIGA). The Extracellular portion of the chain corresponds to 109 to 131 (ILCFLAYGIQAASEDEPANDNLY). The chain crosses the membrane as a helical span at residues 132–152 (LGIVLSAVVIITGCFSYYQEA). Residues 153–288 (KSSKIMESFK…GGKTPIAIEI (136 aa)) are Cytoplasmic-facing. Positions 216–237 (SSLTGESEPQTRSPDFSNENPL) are disordered. Residues 289-308 (EHFIHIITGVAVFLGVSFFI) traverse the membrane as a helical segment. The Extracellular portion of the chain corresponds to 309–320 (LSLILGYNWLEA). A helical transmembrane segment spans residues 321–338 (VIFLIGIIVANVPEGLLA). Topologically, residues 339 to 772 (TVTVCLTLTA…EEGRLIFDNL (434 aa)) are cytoplasmic. Asp-376 serves as the catalytic 4-aspartylphosphate intermediate. Lys-487 contacts ATP. Mg(2+) is bound by residues Asp-717 and Asp-721. The helical transmembrane segment at 773-792 (KKSIAYTLTSNIPEISPFLL) threads the bilayer. Over 793-802 (FIIANIPLPL) the chain is Extracellular. The helical transmembrane segment at 803–823 (GTVTILCIDLGTDMVPAISLA) threads the bilayer. Over 824 to 843 (YEKAESDIMKRQPRNPKTDK) the chain is Cytoplasmic. The helical transmembrane segment at 844–866 (LVNERLISIAYGQIGMMQATAGF) threads the bilayer. The Extracellular segment spans residues 867–918 (FTYFVILAENGFLPMDLIGVRVLWDDKYVNDLEDSYGQQWTYERRKIVEYSC). The helical transmembrane segment at 919–938 (HTAFFASIVIVQWADLIICK) threads the bilayer. Residues 939-951 (TRRNSIVQQGMTN) are Cytoplasmic-facing. A Phosphoserine; by PKA modification is found at Ser-943. The chain crosses the membrane as a helical span at residues 952–970 (RILIFGLFEETALAAFLSY). Residues 971 to 985 (CPGMDVALRMYPMKP) are Extracellular-facing. A helical transmembrane segment spans residues 986–1006 (LWWFCAFPYSLLIFLYDEARR). The Cytoplasmic portion of the chain corresponds to 1007-1023 (YILRRNPGGWVEKETYY).

The protein belongs to the cation transport ATPase (P-type) (TC 3.A.3) family. Type IIC subfamily. As to quaternary structure, the sodium/potassium-transporting ATPase is composed of a catalytic alpha subunit, an auxiliary non-catalytic beta subunit and an additional regulatory subunit.

It localises to the cell membrane. Its subcellular location is the sarcolemma. It carries out the reaction K(+)(out) + Na(+)(in) + ATP + H2O = K(+)(in) + Na(+)(out) + ADP + phosphate + H(+). Its function is as follows. This is the catalytic component of the active enzyme, which catalyzes the hydrolysis of ATP coupled with the exchange of sodium and potassium ions across the plasma membrane. This action creates the electrochemical gradient of sodium and potassium ions, providing the energy for active transport of various nutrients. This chain is Sodium/potassium-transporting ATPase subunit alpha-1 (atp1a1), found in Oreochromis mossambicus (Mozambique tilapia).